We begin with the raw amino-acid sequence, 351 residues long: Thiamine-phosphate synthase (351 aa).

The segment at 1–128 is unknown; the sequence is MLNSNTKDHE…SKIASEIRYE (128 aa). Residues 129–351 are thiamine-phosphate synthase; that stretch reads IYTVEIDLLS…MILKELSHEN (223 aa). Residues 180–184 and N212 contribute to the 4-amino-2-methyl-5-(diphosphooxymethyl)pyrimidine site; that span reads QHRFK. D213 and D232 together coordinate Mg(2+). S251 contacts 4-amino-2-methyl-5-(diphosphooxymethyl)pyrimidine. 277–279 serves as a coordination point for 2-[(2R,5Z)-2-carboxy-4-methylthiazol-5(2H)-ylidene]ethyl phosphate; the sequence is TTT. Residue K280 coordinates 4-amino-2-methyl-5-(diphosphooxymethyl)pyrimidine. Residue G307 coordinates 2-[(2R,5Z)-2-carboxy-4-methylthiazol-5(2H)-ylidene]ethyl phosphate.

The protein belongs to the thiamine-phosphate synthase family. Requires Mg(2+) as cofactor.

It catalyses the reaction 2-[(2R,5Z)-2-carboxy-4-methylthiazol-5(2H)-ylidene]ethyl phosphate + 4-amino-2-methyl-5-(diphosphooxymethyl)pyrimidine + 2 H(+) = thiamine phosphate + CO2 + diphosphate. The catalysed reaction is 2-(2-carboxy-4-methylthiazol-5-yl)ethyl phosphate + 4-amino-2-methyl-5-(diphosphooxymethyl)pyrimidine + 2 H(+) = thiamine phosphate + CO2 + diphosphate. It carries out the reaction 4-methyl-5-(2-phosphooxyethyl)-thiazole + 4-amino-2-methyl-5-(diphosphooxymethyl)pyrimidine + H(+) = thiamine phosphate + diphosphate. It participates in cofactor biosynthesis; thiamine diphosphate biosynthesis; thiamine phosphate from 4-amino-2-methyl-5-diphosphomethylpyrimidine and 4-methyl-5-(2-phosphoethyl)-thiazole: step 1/1. In terms of biological role, condenses 4-methyl-5-(beta-hydroxyethyl)thiazole monophosphate (THZ-P) and 2-methyl-4-amino-5-hydroxymethyl pyrimidine pyrophosphate (HMP-PP) to form thiamine monophosphate (TMP). This Prochlorococcus marinus (strain AS9601) protein is Thiamine-phosphate synthase.